A 122-amino-acid chain; its full sequence is S-adenosylmethionine decarboxylase proenzyme (122 aa).

Catalysis depends on Ser-69, which acts as the Schiff-base intermediate with substrate; via pyruvic acid. A Pyruvic acid (Ser); by autocatalysis modification is found at Ser-69. His-74 (proton acceptor; for processing activity) is an active-site residue. Cys-89 (proton donor; for catalytic activity) is an active-site residue.

It belongs to the prokaryotic AdoMetDC family. Type 1 subfamily. As to quaternary structure, heterotetramer of two alpha and two beta chains arranged as a dimer of alpha/beta heterodimers. The cofactor is pyruvate. Post-translationally, is synthesized initially as an inactive proenzyme. Formation of the active enzyme involves a self-maturation process in which the active site pyruvoyl group is generated from an internal serine residue via an autocatalytic post-translational modification. Two non-identical subunits are generated from the proenzyme in this reaction, and the pyruvate is formed at the N-terminus of the alpha chain, which is derived from the carboxyl end of the proenzyme. The post-translation cleavage follows an unusual pathway, termed non-hydrolytic serinolysis, in which the side chain hydroxyl group of the serine supplies its oxygen atom to form the C-terminus of the beta chain, while the remainder of the serine residue undergoes an oxidative deamination to produce ammonia and the pyruvoyl group blocking the N-terminus of the alpha chain.

It catalyses the reaction S-adenosyl-L-methionine + H(+) = S-adenosyl 3-(methylsulfanyl)propylamine + CO2. It participates in amine and polyamine biosynthesis; S-adenosylmethioninamine biosynthesis; S-adenosylmethioninamine from S-adenosyl-L-methionine: step 1/1. In terms of biological role, catalyzes the decarboxylation of S-adenosylmethionine to S-adenosylmethioninamine (dcAdoMet), the propylamine donor required for the synthesis of the polyamines spermine and spermidine from the diamine putrescine. This chain is S-adenosylmethionine decarboxylase proenzyme, found in Sulfolobus acidocaldarius (strain ATCC 33909 / DSM 639 / JCM 8929 / NBRC 15157 / NCIMB 11770).